Consider the following 437-residue polypeptide: Glutamate-1-semialdehyde 2,1-aminomutase (437 aa).

Position 273 is an N6-(pyridoxal phosphate)lysine (lysine 273).

It belongs to the class-III pyridoxal-phosphate-dependent aminotransferase family. HemL subfamily. Homodimer. The cofactor is pyridoxal 5'-phosphate.

It localises to the cytoplasm. It catalyses the reaction (S)-4-amino-5-oxopentanoate = 5-aminolevulinate. It participates in porphyrin-containing compound metabolism; protoporphyrin-IX biosynthesis; 5-aminolevulinate from L-glutamyl-tRNA(Glu): step 2/2. The polypeptide is Glutamate-1-semialdehyde 2,1-aminomutase (Chlamydia caviae (strain ATCC VR-813 / DSM 19441 / 03DC25 / GPIC) (Chlamydophila caviae)).